The sequence spans 288 residues: Bifunctional protein FolD (288 aa).

NADP(+)-binding positions include 166-168, Ser191, and Ile232; that span reads GRS.

It belongs to the tetrahydrofolate dehydrogenase/cyclohydrolase family. Homodimer.

The enzyme catalyses (6R)-5,10-methylene-5,6,7,8-tetrahydrofolate + NADP(+) = (6R)-5,10-methenyltetrahydrofolate + NADPH. It catalyses the reaction (6R)-5,10-methenyltetrahydrofolate + H2O = (6R)-10-formyltetrahydrofolate + H(+). It functions in the pathway one-carbon metabolism; tetrahydrofolate interconversion. In terms of biological role, catalyzes the oxidation of 5,10-methylenetetrahydrofolate to 5,10-methenyltetrahydrofolate and then the hydrolysis of 5,10-methenyltetrahydrofolate to 10-formyltetrahydrofolate. The sequence is that of Bifunctional protein FolD from Rickettsia massiliae (strain Mtu5).